Here is a 409-residue protein sequence, read N- to C-terminus: LL-diaminopimelate aminotransferase (409 aa).

Y15 and G42 together coordinate substrate. Pyridoxal 5'-phosphate-binding positions include Y72, 108 to 109 (SK), Y132, N187, Y218, and 246 to 248 (SFS). Substrate is bound by residues K109, Y132, and N187. Residue K249 is modified to N6-(pyridoxal phosphate)lysine. R257 and N292 together coordinate pyridoxal 5'-phosphate. Residues N292 and R388 each coordinate substrate.

It belongs to the class-I pyridoxal-phosphate-dependent aminotransferase family. LL-diaminopimelate aminotransferase subfamily. In terms of assembly, homodimer. Requires pyridoxal 5'-phosphate as cofactor.

The enzyme catalyses (2S,6S)-2,6-diaminopimelate + 2-oxoglutarate = (S)-2,3,4,5-tetrahydrodipicolinate + L-glutamate + H2O + H(+). It functions in the pathway amino-acid biosynthesis; L-lysine biosynthesis via DAP pathway; LL-2,6-diaminopimelate from (S)-tetrahydrodipicolinate (aminotransferase route): step 1/1. In terms of biological role, involved in the synthesis of meso-diaminopimelate (m-DAP or DL-DAP), required for both lysine and peptidoglycan biosynthesis. Catalyzes the direct conversion of tetrahydrodipicolinate to LL-diaminopimelate. The chain is LL-diaminopimelate aminotransferase from Acaryochloris marina (strain MBIC 11017).